The chain runs to 1274 residues: Myosin-binding protein C, cardiac-type (1274 aa).

The residue at position 1 (Met-1) is an N-acetylmethionine. Ser-47 bears the Phosphoserine mark. The span at 107 to 141 (APAPAEATGAPGEAPAPAAELGESAPSPKGSSSAA) shows a compositional bias: low complexity. Residues 107 to 153 (APAPAEATGAPGEAPAPAAELGESAPSPKGSSSAALNGPTPGAPDDP) form a disordered region. The Ig-like C2-type 1 domain occupies 153 to 256 (PIGLFVMRPQ…FDCSNFNLTV (104 aa)). Zn(2+) contacts are provided by Gln-208, His-210, Glu-223, and His-225. Phosphoserine; by PKA and PKC is present on residues Ser-275, Ser-284, and Ser-304. A phosphoserine mark is found at Ser-311 and Ser-427. 4 Ig-like C2-type domains span residues 362 to 452 (STAF…VKEP), 453 to 543 (PVLI…VQEK), 544 to 633 (KLEV…HFME), and 645 to 771 (PKIH…VIDV). A disulfide bond links Cys-436 and Cys-443. Ser-550 bears the Phosphoserine mark. The residue at position 607 (Thr-607) is a Phosphothreonine. 2 consecutive Fibronectin type-III domains span residues 774 to 870 (APAA…IGPP) and 872 to 967 (EPTH…VQEI). Positions 971–1065 (PRLQLPRHLR…ATLVLQVVDK (95 aa)) constitute an Ig-like C2-type 6 domain. One can recognise a Fibronectin type-III 3 domain in the interval 1068-1163 (PPQDLRVTDA…TKEPVFIPRP (96 aa)). An Ig-like C2-type 7 domain is found at 1181 to 1274 (PSFTQPLVNR…ECRLEVRVPQ (94 aa)). Arg-1241 carries the post-translational modification Omega-N-methylarginine.

This sequence belongs to the immunoglobulin superfamily. MyBP family. In terms of processing, substrate for phosphorylation by PKA and PKC. Reversible phosphorylation appears to modulate contraction. Post-translationally, polyubiquitinated.

Thick filament-associated protein located in the crossbridge region of vertebrate striated muscle a bands. In vitro it binds MHC, F-actin and native thin filaments, and modifies the activity of actin-activated myosin ATPase. It may modulate muscle contraction or may play a more structural role. The sequence is that of Myosin-binding protein C, cardiac-type (MYBPC3) from Homo sapiens (Human).